The primary structure comprises 179 residues: Large ribosomal subunit protein uL6 (179 aa).

The protein belongs to the universal ribosomal protein uL6 family. Part of the 50S ribosomal subunit.

In terms of biological role, this protein binds to the 23S rRNA, and is important in its secondary structure. It is located near the subunit interface in the base of the L7/L12 stalk, and near the tRNA binding site of the peptidyltransferase center. The protein is Large ribosomal subunit protein uL6 of Rhodococcus opacus (strain B4).